Reading from the N-terminus, the 264-residue chain is Glutamate racemase (264 aa).

Substrate-binding positions include 10–11 and 42–43; these read DS and YG. Cys-73 acts as the Proton donor/acceptor in catalysis. 74 to 75 is a binding site for substrate; sequence NT. Cys-183 serves as the catalytic Proton donor/acceptor. 184 to 185 contributes to the substrate binding site; it reads TH.

This sequence belongs to the aspartate/glutamate racemases family.

The enzyme catalyses L-glutamate = D-glutamate. The protein operates within cell wall biogenesis; peptidoglycan biosynthesis. Functionally, provides the (R)-glutamate required for cell wall biosynthesis. The polypeptide is Glutamate racemase (Streptococcus equi subsp. zooepidemicus (strain H70)).